Consider the following 185-residue polypeptide: Small ribosomal subunit protein uS5 (185 aa).

Residues 29-92 form the S5 DRBM domain; the sequence is LEEKVVKINR…EKAKKQLVRI (64 aa).

This sequence belongs to the universal ribosomal protein uS5 family. As to quaternary structure, part of the 30S ribosomal subunit. Contacts proteins S4 and S8.

Functionally, with S4 and S12 plays an important role in translational accuracy. Located at the back of the 30S subunit body where it stabilizes the conformation of the head with respect to the body. This chain is Small ribosomal subunit protein uS5, found in Aster yellows witches'-broom phytoplasma (strain AYWB).